The sequence spans 418 residues: MRLSAGPDAGPSGNSSPWWPLATGAGNTSREAEALGEGNGPPRDVRNEELAKLEIAVLAVTFAVAVLGNSSVLLALHRTPRKTSRMHLFIRHLSLADLAVAFFQVLPQMCWDITYRFRGPDWLCRVVKHLQVFGMFASAYMLVVMTADRYIAVCHPLKTLQQPARRSRLMIAAAWVLSFVLSTPQYFVFSMIEVNNVTKARDCWATFIQPWGSRAYVTWMTGGIFVAPVVILGTCYGFICYNIWCNVRGKTASRQSKGAEQAGVAFQKGFLLAPCVSSVKSISRAKIRTVKMTFVIVTAYIVCWAPFFIIQMWSVWDPMSVWTESENPTITITALLGSLNSCCNPWIYMFFSGHLLQDCVQSFPCCQNMKEKFNKEDTDSMSRRQTFYSNNRSPTNSTGMWKDSPKSSKSIKFIPVST.

The interval 1–43 (MRLSAGPDAGPSGNSSPWWPLATGAGNTSREAEALGEGNGPPR) is disordered. The Extracellular portion of the chain corresponds to 1–52 (MRLSAGPDAGPSGNSSPWWPLATGAGNTSREAEALGEGNGPPRDVRNEELAK). N-linked (GlcNAc...) asparagine glycosylation is present at N27. Residues 53–76 (LEIAVLAVTFAVAVLGNSSVLLAL) form a helical membrane-spanning segment. Topologically, residues 77-88 (HRTPRKTSRMHL) are cytoplasmic. The helical transmembrane segment at 89 to 110 (FIRHLSLADLAVAFFQVLPQMC) threads the bilayer. At 111-125 (WDITYRFRGPDWLCR) the chain is on the extracellular side. A disulfide bridge connects residues C124 and C203. Residues 126–147 (VVKHLQVFGMFASAYMLVVMTA) form a helical membrane-spanning segment. At 148 to 168 (DRYIAVCHPLKTLQQPARRSR) the chain is on the cytoplasmic side. Residues 169–190 (LMIAAAWVLSFVLSTPQYFVFS) form a helical membrane-spanning segment. Topologically, residues 191–218 (MIEVNNVTKARDCWATFIQPWGSRAYVT) are extracellular. The N-linked (GlcNAc...) asparagine glycan is linked to N196. A helical transmembrane segment spans residues 219 to 239 (WMTGGIFVAPVVILGTCYGFI). Over 240-293 (CYNIWCNVRGKTASRQSKGAEQAGVAFQKGFLLAPCVSSVKSISRAKIRTVKMT) the chain is Cytoplasmic. A helical transmembrane segment spans residues 294–313 (FVIVTAYIVCWAPFFIIQMW). At 314-331 (SVWDPMSVWTESENPTIT) the chain is on the extracellular side. The chain crosses the membrane as a helical span at residues 332-351 (ITALLGSLNSCCNPWIYMFF). Topologically, residues 352 to 418 (SGHLLQDCVQ…KSIKFIPVST (67 aa)) are cytoplasmic. Residues C365 and C366 are each lipidated (S-palmitoyl cysteine). Positions 377–410 (DTDSMSRRQTFYSNNRSPTNSTGMWKDSPKSSKS) are disordered. The segment covering 383-399 (RRQTFYSNNRSPTNSTG) has biased composition (polar residues). Residue S404 is modified to Phosphoserine.

Belongs to the G-protein coupled receptor 1 family. Vasopressin/oxytocin receptor subfamily.

The protein localises to the cell membrane. Its function is as follows. Receptor for arginine vasopressin. The activity of this receptor is mediated by G proteins which activate a phosphatidyl-inositol-calcium second messenger system. Has been involved in social behaviors, including affiliation and attachment. The sequence is that of Vasopressin V1a receptor (AVPR1A) from Homo sapiens (Human).